The following is a 90-amino-acid chain: Small ribosomal subunit protein bS16 (90 aa).

It belongs to the bacterial ribosomal protein bS16 family.

The chain is Small ribosomal subunit protein bS16 from Lactobacillus delbrueckii subsp. bulgaricus (strain ATCC 11842 / DSM 20081 / BCRC 10696 / JCM 1002 / NBRC 13953 / NCIMB 11778 / NCTC 12712 / WDCM 00102 / Lb 14).